The primary structure comprises 397 residues: 1-deoxy-D-xylulose 5-phosphate reductoisomerase (397 aa).

Thr10, Gly11, Ser12, Ile13, Gly36, Asn38, and Asn124 together coordinate NADPH. Lys125 lines the 1-deoxy-D-xylulose 5-phosphate pocket. NADPH is bound at residue Glu126. Position 150 (Asp150) interacts with Mn(2+). Positions 151, 152, 186, and 209 each coordinate 1-deoxy-D-xylulose 5-phosphate. Glu152 is a binding site for Mn(2+). An NADPH-binding site is contributed by Gly215. 1-deoxy-D-xylulose 5-phosphate is bound by residues Ser222, Asn227, Lys228, and Glu231. Glu231 is a binding site for Mn(2+).

This sequence belongs to the DXR family. Mg(2+) is required as a cofactor. It depends on Mn(2+) as a cofactor.

The catalysed reaction is 2-C-methyl-D-erythritol 4-phosphate + NADP(+) = 1-deoxy-D-xylulose 5-phosphate + NADPH + H(+). It functions in the pathway isoprenoid biosynthesis; isopentenyl diphosphate biosynthesis via DXP pathway; isopentenyl diphosphate from 1-deoxy-D-xylulose 5-phosphate: step 1/6. Functionally, catalyzes the NADPH-dependent rearrangement and reduction of 1-deoxy-D-xylulose-5-phosphate (DXP) to 2-C-methyl-D-erythritol 4-phosphate (MEP). This is 1-deoxy-D-xylulose 5-phosphate reductoisomerase from Photobacterium profundum (strain SS9).